We begin with the raw amino-acid sequence, 498 residues long: MEKYIMSLDQGTTSSRCIIFNKKGEVVSVAQKEFTQIYPKAGWVEHDPLEIWGKQAGVAGEALNIARISPEQIAGIGITNQRETTVVWNKRTGMPVYNAIVWQCRRTAGYCDELREKGLDKTIKEKTGLMLDAYFSATKIKWILDNVEGARELAEKGDLLFGNIDTWLIWNMTKGKIHVTDYTNASRTMLFNIHELKWDEELLEILDIPKSMLPEVKPSSCVYGETDEILFGVSIPISGDAGDQQAALFGQTCFNAGMAKNTYGTGCFLLMNTGEKAVDSKNGLLTTIAVGIDGKVEYALEGSIFIGGAVIQWLRDELRMVKTAQETEKYATEVEDNNGVYLVPAFVGIGAPYWDSYARGTILGLTRGAKKEHIIRAALESMAYQTHDVLKAMEEDSGIELKALKVDGGACQNNFLMQFQSDILGVEVDRPEVVETTALGAAYLAGLAVGYWKDRNEISQNWAISRSFAPAMEDEKKEKLIKGWHKAVTKAMDWEEKE.

An ADP-binding site is contributed by threonine 12. ATP contacts are provided by threonine 12, threonine 13, and serine 14. Threonine 12 contacts sn-glycerol 3-phosphate. Arginine 16 is a binding site for ADP. Positions 82, 83, 134, and 243 each coordinate sn-glycerol 3-phosphate. Arginine 82, glutamate 83, tyrosine 134, aspartate 243, and glutamine 244 together coordinate glycerol. The ADP site is built by threonine 265 and glycine 308. ATP contacts are provided by threonine 265, glycine 308, glutamine 312, and glycine 409. Positions 409 and 413 each coordinate ADP.

It belongs to the FGGY kinase family. Homotetramer and homodimer (in equilibrium).

The catalysed reaction is glycerol + ATP = sn-glycerol 3-phosphate + ADP + H(+). Its pathway is polyol metabolism; glycerol degradation via glycerol kinase pathway; sn-glycerol 3-phosphate from glycerol: step 1/1. With respect to regulation, activated by phosphorylation and inhibited by fructose 1,6-bisphosphate (FBP). Functionally, key enzyme in the regulation of glycerol uptake and metabolism. Catalyzes the phosphorylation of glycerol to yield sn-glycerol 3-phosphate. This chain is Glycerol kinase, found in Clostridium botulinum (strain Langeland / NCTC 10281 / Type F).